Here is an 88-residue protein sequence, read N- to C-terminus: Large ribosomal subunit protein bL27 (88 aa).

The interval 1 to 20 is disordered; the sequence is MASKKGVGSTKDGRDSIAKR.

It belongs to the bacterial ribosomal protein bL27 family.

The sequence is that of Large ribosomal subunit protein bL27 (rpmA) from Geobacillus stearothermophilus (Bacillus stearothermophilus).